The following is a 506-amino-acid chain: Glucosidase 2 subunit beta (506 aa).

The N-terminal stretch at 1-23 is a signal peptide; it reads MKFSQWYTLTAPLLISSLYTVNA. The cysteines at positions 86 and 108 are disulfide-linked. Coiled-coil stretches lie at residues 172 to 243 and 338 to 374; these read SLVA…LYET and ESYR…LEYH. The MRH domain occupies 279 to 474; that stretch reads ESCNNHLSML…KMKSPAACSP (196 aa). 2 disulfides stabilise this stretch: Cys-431–Cys-460 and Cys-445–Cys-472. The ER retrieval sequence signature appears at 503-506; the sequence is VDEL.

Heterodimer of a catalytic subunit alpha (gls2) and a subunit beta (gtb1).

The protein resides in the endoplasmic reticulum. In terms of biological role, subunit of glucosidase 2, which cleaves sequentially the 2 innermost alpha-1,3-linked glucose residues from the Glc(2)Man(9)GlcNAc(2) oligosaccharide precursor of immature glycoproteins in the endoplasmic reticulum (ER). Specifically required for the cleavage of the final glucose. The subunit beta retains the catalytic subunit alpha in the ER. This Schizosaccharomyces pombe (strain 972 / ATCC 24843) (Fission yeast) protein is Glucosidase 2 subunit beta (gtb1).